A 277-amino-acid polypeptide reads, in one-letter code: tRNA uridine(34) hydroxylase (277 aa).

Positions 126–221 (SSPDVHVIDT…YLETMRGDDS (96 aa)) constitute a Rhodanese domain. C181 (cysteine persulfide intermediate) is an active-site residue.

Belongs to the TrhO family.

The catalysed reaction is uridine(34) in tRNA + AH2 + O2 = 5-hydroxyuridine(34) in tRNA + A + H2O. Catalyzes oxygen-dependent 5-hydroxyuridine (ho5U) modification at position 34 in tRNAs. This is tRNA uridine(34) hydroxylase from Anaplasma marginale (strain St. Maries).